The sequence spans 370 residues: Protein DVU_0535 (370 aa).

At 1 to 258 (MDRRRFLTLL…EELGTKSAPE (258 aa)) the chain is on the cytoplasmic side. 4Fe-4S ferredoxin-type domains follow at residues 40-70 (YGVLHDTTRCIGCRKCEQACNEVNKLPAPKA), 101-132 (DHPVFRKQQCNHCLEPACASACFVKAFTKNPD), and 133-162 (GSVTYDGSLCVGCRYCMVACPFNVPAFQYA). [4Fe-4S] cluster contacts are provided by C49, C52, C55, C59, C110, C113, C118, C122, C142, C145, C148, C152, C172, C175, C187, and C191. Residues 259-284 (YTAGALGAVPMVVGIWPILLTGAYAI) traverse the membrane as a helical segment. Residues 285–370 (TKRKEKIAAE…DDAGKPGEDA (86 aa)) lie on the Periplasmic side of the membrane. Residues 345-355 (FEEELAAKEQP) show a composition bias toward basic and acidic residues. Residues 345-370 (FEEELAAKEQPEAPEGDDAGKPGEDA) are disordered.

The protein localises to the cell membrane. In terms of biological role, HMWC (high-molecular-weight cytochrome c precursor), ORF2, ORF3, ORF4, ORF5, ORF6 in the HMC operon form a transmembrane protein complex that allows electron flow from the periplasmic hydrogenase to the cytoplasmic enzymes that catalyze reduction of sulfates. ORF2 is a transmembrane redox protein. The sequence is that of Protein DVU_0535 from Nitratidesulfovibrio vulgaris (strain ATCC 29579 / DSM 644 / CCUG 34227 / NCIMB 8303 / VKM B-1760 / Hildenborough) (Desulfovibrio vulgaris).